Reading from the N-terminus, the 308-residue chain is UDP-N-acetylenolpyruvoylglucosamine reductase (308 aa).

The FAD-binding PCMH-type domain occupies 33-197 (TGGNADFYLS…LEASFNLAPG (165 aa)). Residue Arg176 is part of the active site. Ser226 functions as the Proton donor in the catalytic mechanism. Glu296 is an active-site residue.

This sequence belongs to the MurB family. FAD serves as cofactor.

It localises to the cytoplasm. The catalysed reaction is UDP-N-acetyl-alpha-D-muramate + NADP(+) = UDP-N-acetyl-3-O-(1-carboxyvinyl)-alpha-D-glucosamine + NADPH + H(+). Its pathway is cell wall biogenesis; peptidoglycan biosynthesis. Functionally, cell wall formation. This chain is UDP-N-acetylenolpyruvoylglucosamine reductase, found in Staphylococcus carnosus (strain TM300).